An 849-amino-acid chain; its full sequence is Ribosome biogenesis protein ERB1 (849 aa).

A disordered region spans residues 1 to 130; it reads MARNSIKKSP…PKDDDLSRIN (130 aa). 2 stretches are compositionally biased toward acidic residues: residues 29–44 and 51–123; these read EAEEDSNDEESEDELN and ASDD…EPKD. The tract at residues 286-405 is required for interaction with NOP7; the sequence is RFVPSKHEAK…LRQVPGYQDS (120 aa). The interval 405-441 is required for interaction with YTM1; the sequence is SVRERFERSLDLYLAPRVRHNKLNIDPDSLIPDLPSP. WD repeat units lie at residues 457 to 496 and 505 to 545; these read GHTGKIRTISIDPQGLWLATGSDDGSVRIWEILTGRQVYK and NNED…FDIE. The span at 569 to 581 shows a compositional bias: basic and acidic residues; that stretch reads KISSQKEEDNKES. A disordered region spans residues 569 to 619; that stretch reads KISSQKEEDNKESDNEDEDEEEDNDDDDDDDEPETSSTVEPKKEVAKWYPP. The span at 582–602 shows a compositional bias: acidic residues; the sequence is DNEDEDEEEDNDDDDDDDEPE. 5 WD repeats span residues 633–675, 678–716, 719–758, 762–802, and 818–849; these read QCRK…SQSP, KSKGIIMDAKFHPFKPQLFVASQRQIKIYDLAQQVLLKK, PGVRLLSTIDIHPRGDNLIAGSYDKRVLWHDLDLSATPYK, YHEK…DLMT, and INQIGILDLIWHPKEPWLFSAGADGTARLWTT.

Belongs to the WD repeat BOP1/ERB1 family. Component of the NOP7 complex, composed of ERB1, NOP7 and YTM1. The complex is held together by ERB1, which interacts with NOP7 via its N-terminal domain and with YTM1 via a high-affinity interaction between the seven-bladed beta-propeller domains of the 2 proteins. The NOP7 complex associates with the 66S pre-ribosome.

Its subcellular location is the nucleus. The protein resides in the nucleolus. It localises to the nucleoplasm. In terms of biological role, component of the NOP7 complex, which is required for maturation of the 25S and 5.8S ribosomal RNAs and formation of the 60S ribosome. This Candida albicans (strain SC5314 / ATCC MYA-2876) (Yeast) protein is Ribosome biogenesis protein ERB1.